A 138-amino-acid polypeptide reads, in one-letter code: Basic phospholipase A2 Tpu-G6D49 (138 aa).

The signal sequence occupies residues 1–16 (MRTLWIMAVLLVGVEG). 7 cysteine pairs are disulfide-bonded: Cys-42/Cys-131, Cys-44/Cys-60, Cys-59/Cys-111, Cys-65/Cys-138, Cys-66/Cys-104, Cys-73/Cys-97, and Cys-91/Cys-102. Ca(2+) contacts are provided by Tyr-43, Gly-45, and Gly-47. The active site involves His-63. Asp-64 serves as a coordination point for Ca(2+). The active site involves Asp-105.

Monomer. The cofactor is Ca(2+). In terms of tissue distribution, expressed by the venom gland.

It localises to the secreted. It carries out the reaction a 1,2-diacyl-sn-glycero-3-phosphocholine + H2O = a 1-acyl-sn-glycero-3-phosphocholine + a fatty acid + H(+). Snake venom phospholipase A2 (PLA2) that impairs hemostasis. It weakly inhibits ADP-induced platelet aggregation when tested on platelet rich plasma from human and rabbit blood (15-25% of inhibition at 5-10 ug of enzyme), and dose-dependently inhibits blood coagulation, possibly by inhibiting thrombin activation. Also induces local edema a few hours after injection in the hind foot. Exhibits high hydrolytic activities toward L-dipalmitoyl phosphatidylcholine. PLA2 catalyzes the calcium-dependent hydrolysis of the 2-acyl groups in 3-sn-phosphoglycerides. This is Basic phospholipase A2 Tpu-G6D49 from Craspedocephalus puniceus (Flat-nosed pitviper).